An 89-amino-acid chain; its full sequence is Large ribosomal subunit protein bL27 (89 aa).

Residues 1-21 (MAHKKAGGSSRNGRDTEGRRL) are disordered.

It belongs to the bacterial ribosomal protein bL27 family.

The polypeptide is Large ribosomal subunit protein bL27 (Granulibacter bethesdensis (strain ATCC BAA-1260 / CGDNIH1)).